A 1084-amino-acid chain; its full sequence is Probable sucrose-phosphate synthase 1 (1084 aa).

Residues 25-46 (GGGGGGGGGGGGGGGGGGGGGV) are compositionally biased toward gly residues. A disordered region spans residues 25–61 (GGGGGGGGGGGGGGGGGGGGGVDPRSPAAGAASPRGP). Positions 48–61 (PRSPAAGAASPRGP) are enriched in low complexity.

Belongs to the glycosyltransferase 1 family. As to quaternary structure, homodimer or homotetramer. In terms of tissue distribution, expressed in leaves mesophyll cells, scutellum of germinating seedlings and pollen of immature inflorescences.

The enzyme catalyses beta-D-fructose 6-phosphate + UDP-alpha-D-glucose = sucrose 6(F)-phosphate + UDP + H(+). It functions in the pathway glycan biosynthesis; sucrose biosynthesis; sucrose from D-fructose 6-phosphate and UDP-alpha-D-glucose: step 1/2. Its activity is regulated as follows. Activity is regulated by phosphorylation and moderated by concentration of metabolites and light. In terms of biological role, plays a role in photosynthetic sucrose synthesis by catalyzing the rate-limiting step of sucrose biosynthesis from UDP-glucose and fructose- 6-phosphate. Involved in the regulation of carbon partitioning in the leaves of plants. May regulate the synthesis of sucrose and therefore play a major role as a limiting factor in the export of photoassimilates out of the leaf. Plays a role for sucrose availability that is essential for plant growth and fiber elongation. The protein is Probable sucrose-phosphate synthase 1 (SPS1) of Oryza sativa subsp. indica (Rice).